A 348-amino-acid chain; its full sequence is Methylthioribose-1-phosphate isomerase (348 aa).

Substrate-binding positions include 54–56 (RGA), Arg-96, and Gln-199. Asp-240 functions as the Proton donor in the catalytic mechanism. Residue 250–251 (NK) participates in substrate binding.

It belongs to the eIF-2B alpha/beta/delta subunits family. MtnA subfamily.

It carries out the reaction 5-(methylsulfanyl)-alpha-D-ribose 1-phosphate = 5-(methylsulfanyl)-D-ribulose 1-phosphate. The protein operates within amino-acid biosynthesis; L-methionine biosynthesis via salvage pathway; L-methionine from S-methyl-5-thio-alpha-D-ribose 1-phosphate: step 1/6. In terms of biological role, catalyzes the interconversion of methylthioribose-1-phosphate (MTR-1-P) into methylthioribulose-1-phosphate (MTRu-1-P). In Thioalkalivibrio sulfidiphilus (strain HL-EbGR7), this protein is Methylthioribose-1-phosphate isomerase.